The following is a 1071-amino-acid chain: ATP-dependent helicase/deoxyribonuclease subunit B (1071 aa).

Belongs to the helicase family. AddB/RexB type 2 subfamily. As to quaternary structure, heterodimer of AddA and RexB. Mg(2+) serves as cofactor.

In terms of biological role, the heterodimer acts as both an ATP-dependent DNA helicase and an ATP-dependent, dual-direction single-stranded exonuclease. Recognizes the chi site generating a DNA molecule suitable for the initiation of homologous recombination. This subunit has 5' -&gt; 3' nuclease activity but not helicase activity. This Streptococcus pyogenes serotype M1 protein is ATP-dependent helicase/deoxyribonuclease subunit B.